The following is a 251-amino-acid chain: Aquaporin (251 aa).

At 1 to 11 the chain is on the cytoplasmic side; that stretch reads MAKEALKTLQS. The helical transmembrane segment at 12 to 32 threads the bilayer; that stretch reads MFGEMVASFVFGFAVYSAILG. At 33–42 the chain is on the extracellular side; it reads SSISQSSADK. A helical membrane pass occupies residues 43–63; it reads VIVGLTVGFSGIGVIYSFCDV. At 64-86 the chain is on the cytoplasmic side; sequence TIAHFNPAITLAAILTSKIDVLQ. An NPA motif is present at residues 69–71; sequence NPA. A helical transmembrane segment spans residues 87 to 107; that stretch reads GLGYMLAQYIGFMLAVCALLV. At 108–133 the chain is on the extracellular side; the sequence is CSPVEYKETLDTIRPGPTDFGATSLN. The helical transmembrane segment at 134-154 threads the bilayer; sequence VFFAEFFLTAIFVHIVFATAV. At 155-179 the chain is on the cytoplasmic side; the sequence is NPYKPKVDTEGKFVDPDEKEPVDRR. Residues 180–200 traverse the membrane as a helical segment; it reads ITAPLCIGLTLGFLAFMGLAS. Residues 201–224 lie on the Extracellular side of the membrane; the sequence is SGGAFNPGLTFAPMAMSNTWSHFW. The NPG motif lies at 206-208; that stretch reads NPG. Residues 225–245 form a helical membrane-spanning segment; sequence IYLGGQYLGGLTGGLLQVLVL. Residues 246 to 251 are Cytoplasmic-facing; sequence YKLSSD.

The protein belongs to the MIP/aquaporin (TC 1.A.8) family.

The protein localises to the cell membrane. Its function is as follows. Water channel required to facilitate the transport of water across membranes. Involved in osmotolerance. The chain is Aquaporin (AQP) from Encephalitozoon intestinalis (Microsporidian parasite).